The following is a 102-amino-acid chain: UPF0251 protein ASA_1331 (102 aa).

This sequence belongs to the UPF0251 family.

This is UPF0251 protein ASA_1331 from Aeromonas salmonicida (strain A449).